The sequence spans 421 residues: D-amino acid dehydrogenase (421 aa).

3–17 (VLVLGGGVVGVASAY) contacts FAD.

This sequence belongs to the DadA oxidoreductase family. Requires FAD as cofactor.

It catalyses the reaction a D-alpha-amino acid + A + H2O = a 2-oxocarboxylate + AH2 + NH4(+). The protein operates within amino-acid degradation; D-alanine degradation; NH(3) and pyruvate from D-alanine: step 1/1. Oxidative deamination of D-amino acids. In Methylobacterium nodulans (strain LMG 21967 / CNCM I-2342 / ORS 2060), this protein is D-amino acid dehydrogenase.